Consider the following 436-residue polypeptide: Bystin (436 aa).

Positions 1–105 are disordered; that stretch reads MPKLKVTRGA…GSDEEDEEWP (105 aa). Ser-54 carries the phosphoserine modification. Residues 70–86 are compositionally biased toward basic and acidic residues; it reads TEHATGDRPAKPRERAT. Residues 96–105 show a composition bias toward acidic residues; the sequence is GSDEEDEEWP. The residue at position 97 (Ser-97) is a Phosphoserine. Position 155 is a phosphothreonine (Thr-155). Residues Ser-166 and Ser-413 each carry the phosphoserine modification.

It belongs to the bystin family. In terms of assembly, binds trophinin, tastin and cytokeratins.

It localises to the cytoplasm. It is found in the nucleus. The protein localises to the nucleolus. In terms of biological role, required for processing of 20S pre-rRNA precursor and biogenesis of 40S ribosomal subunits. The protein is Bystin of Rattus norvegicus (Rat).